A 317-amino-acid chain; its full sequence is Ceramide reductase (317 aa).

The first 27 residues, M1 to A27, serve as a signal peptide directing secretion.

The protein belongs to the NAD(P)-dependent epimerase/dehydratase family.

It localises to the periplasm. The catalysed reaction is N-acyl-3-oxosphinganine + NADH + H(+) = an N-acylsphinganine + NAD(+). Its pathway is lipid metabolism; sphingolipid metabolism. In terms of biological role, involved in de novo bacterial ceramide synthesis. Catalyzes the reduction of bacterial oxidized ceramides to bacterial dihydroceramides. The protein is Ceramide reductase of Caulobacter vibrioides (strain NA1000 / CB15N) (Caulobacter crescentus).